The following is a 120-amino-acid chain: Large ribosomal subunit protein bL21 (120 aa).

This sequence belongs to the bacterial ribosomal protein bL21 family. As to quaternary structure, part of the 50S ribosomal subunit. Contacts protein L20.

In terms of biological role, this protein binds to 23S rRNA in the presence of protein L20. This Roseiflexus sp. (strain RS-1) protein is Large ribosomal subunit protein bL21.